We begin with the raw amino-acid sequence, 201 residues long: tRNA (guanine-N(7)-)-methyltransferase (201 aa).

The S-adenosyl-L-methionine site is built by Glu-33, Glu-58, Asp-85, and Asp-106. Residue Asp-106 is part of the active site. Residues Lys-110, Asp-142, and 180–183 (TTYE) contribute to the substrate site.

Belongs to the class I-like SAM-binding methyltransferase superfamily. TrmB family.

The catalysed reaction is guanosine(46) in tRNA + S-adenosyl-L-methionine = N(7)-methylguanosine(46) in tRNA + S-adenosyl-L-homocysteine. Its pathway is tRNA modification; N(7)-methylguanine-tRNA biosynthesis. Its function is as follows. Catalyzes the formation of N(7)-methylguanine at position 46 (m7G46) in tRNA. This is tRNA (guanine-N(7)-)-methyltransferase from Mesomycoplasma hyopneumoniae (strain 7448) (Mycoplasma hyopneumoniae).